The sequence spans 305 residues: GTPase Era (305 aa).

Residues 9–176 (KSGFISIIGR…LDTLPKYLPE (168 aa)) enclose the Era-type G domain. The segment at 17 to 24 (GRPNVGKS) is G1. 17-24 (GRPNVGKS) provides a ligand contact to GTP. The interval 43-47 (QTTRN) is G2. The segment at 64-67 (DTPG) is G3. GTP-binding positions include 64-68 (DTPGI) and 126-129 (NKID). Positions 126–129 (NKID) are G4. A G5 region spans residues 155 to 157 (ISA). The region spanning 207-286 (TREEIPHSIA…YLELWVKVQK (80 aa)) is the KH type-2 domain.

Belongs to the TRAFAC class TrmE-Era-EngA-EngB-Septin-like GTPase superfamily. Era GTPase family. In terms of assembly, monomer.

It localises to the cytoplasm. Its subcellular location is the cell membrane. An essential GTPase that binds both GDP and GTP, with rapid nucleotide exchange. Plays a role in 16S rRNA processing and 30S ribosomal subunit biogenesis and possibly also in cell cycle regulation and energy metabolism. The protein is GTPase Era of Lysinibacillus sphaericus (strain C3-41).